The following is a 65-amino-acid chain: Sarcoplasmic/endoplasmic reticulum calcium ATPase regulator ARLN (65 aa).

An N-acetylmethionine modification is found at methionine 1. The tract at residues 1–36 (MEVSQAASGTDGVRERRGSFEAGRRNQDEAPQSGMN) is disordered. Positions 12–28 (GVRERRGSFEAGRRNQD) are enriched in basic and acidic residues. The residue at position 19 (serine 19) is a Phosphoserine. The chain crosses the membrane as a helical span at residues 44–64 (WLDLWLFILFDLALFVFVYLL).

Homooligomer. Can also form heterooligomers with other sarcoplasmic/endoplasmic reticulum calcium ATPase (SERCA) regulators ERLN, PLN, SLN and STRIT1/DWORF. Monomer. Interacts as a monomer with ATP2A2/SERCA2; the interaction results in inhibition of ATP2A2 Ca(2+) affinity. In the embryo, expressed in heart, epidermal epithelium, salivary gland, brown fat, intestinal epithelium and bladder urothelium.

The protein localises to the endoplasmic reticulum membrane. Its function is as follows. Inhibits the activity of the calcium ATPases ATP2A2/SERCA2 and ATP2A3/SERCA3 by decreasing their apparent affinity for Ca(2+). The polypeptide is Sarcoplasmic/endoplasmic reticulum calcium ATPase regulator ARLN (Arln) (Mus musculus (Mouse)).